The following is a 414-amino-acid chain: Putative transporter AmpG 4 (414 aa).

The next 12 membrane-spanning stretches (helical) occupy residues isoleucine 15 to valine 35, isoleucine 44 to tryptophan 63, tryptophan 84 to proline 104, threonine 109 to valine 129, valine 150 to isoleucine 170, leucine 177 to asparagine 197, phenylalanine 230 to alanine 250, isoleucine 268 to valine 288, phenylalanine 295 to leucine 315, alanine 324 to valine 344, tyrosine 360 to glycine 379, and glycine 389 to asparagine 409.

Belongs to the major facilitator superfamily.

The protein localises to the cell inner membrane. This chain is Putative transporter AmpG 4 (ampG4), found in Rickettsia conorii (strain ATCC VR-613 / Malish 7).